Here is a 663-residue protein sequence, read N- to C-terminus: Polyunsaturated fatty acid lipoxygenase ALOX15 (663 aa).

In terms of domain architecture, PLAT spans 2–115 (GLYRVRVSTG…ILSLPEGTGR (114 aa)). The Lipoxygenase domain occupies 116 to 663 (TVVDDPQGLF…PSLVENSVAI (548 aa)). Positions 361, 366, 541, 545, and 663 each coordinate Fe cation.

It belongs to the lipoxygenase family. In terms of assembly, interacts with PEBP1; in response to IL13/interleukin-13, prevents the interaction of PEBP1 with RAF1 to activate the ERK signaling cascade. The cofactor is Fe cation. As to expression, detected in tracheal epithelium.

It is found in the cytoplasm. The protein resides in the cytosol. It localises to the cell membrane. Its subcellular location is the lipid droplet. The catalysed reaction is (5Z,8Z,11Z,14Z)-eicosatetraenoate + O2 = (12S)-hydroperoxy-(5Z,8Z,10E,14Z)-eicosatetraenoate. It catalyses the reaction (5Z,8Z,11Z,14Z)-eicosatetraenoate + O2 = (15S)-hydroperoxy-(5Z,8Z,11Z,13E)-eicosatetraenoate. It carries out the reaction (9Z,12Z)-octadecadienoate + O2 = (13S)-hydroperoxy-(9Z,11E)-octadecadienoate. The enzyme catalyses (5Z,8Z,11Z,14Z)-eicosatetraenoate + 2 O2 = (14R,15S)-dihydroperoxy-(5Z,8Z,10E,12E)-eicosatetraenoate. The catalysed reaction is (5Z,8Z,11Z,14Z)-eicosatetraenoate + 2 O2 = (8S,15S)-dihydroperoxy-(5Z,9E,11Z,13E)-eicosatetraenoate. It catalyses the reaction (14S,15R)-epoxy-(5Z,8Z,11Z)-eicosatrienoate + O2 = (8S)-hydroperoxy-(14S,15R)-epoxy-(5Z,9E,11Z)-eicosatrienoate. It carries out the reaction (14S,15R)-epoxy-(5Z,8Z,11Z)-eicosatrienoate + O2 = (12S)-hydroperoxy-(14S,15R)-epoxy-(5Z,8Z,10E)-eicosatrienoate. The enzyme catalyses (14R,15S)-epoxy-(5Z,8Z,11Z)-eicosatrienoate + O2 = (5S)-hydroperoxy-(14R,15S)-epoxy-(6E,8Z,11Z)-eicosatrienoate. The catalysed reaction is (14R,15S)-epoxy-(5Z,8Z,11Z)-eicosatrienoate + O2 = (12S)-hydroperoxy-(14R,15S)-epoxy-(5Z,8Z,10E)-eicosatrienoate. It catalyses the reaction (15R)-hydroperoxy-(5Z,8Z,11Z,13E)-eicosatetraenoate = 15-oxo-(5Z,8Z,11Z,13E)-eicosatetraenoate + H2O. It carries out the reaction (15S)-hydroperoxy-(5Z,8Z,11Z,13E)-eicosatetraenoate = (14S,15S)-epoxy-(5Z,8Z,10E,12E)-eicosatetraenoate + H2O. The enzyme catalyses (12S)-hydroperoxy-(5Z,8Z,10E,14Z)-eicosatetraenoate = (8S)-hydroxy-(11S,12S)-epoxy-(5Z,9E,14Z)-eicosatrienoate. The catalysed reaction is (4Z,7Z,10Z,13Z,16Z)-docosapentaenoate + O2 = 14-hydroperoxy-(4Z,7Z,10Z,12E,16Z)-docosapentaenoate. It catalyses the reaction (7Z,10Z,13Z,16Z,19Z)-docosapentaenoate + O2 = 14-hydroperoxy-(7Z,10Z,12E,16Z,19Z)-docosapentaenoate. It carries out the reaction (4Z,7Z,10Z,13Z,16Z,19Z)-docosahexaenoate + O2 = (14S)-hydroperoxy-(4Z,7Z,10Z,12E,16Z,19Z)-docosahexaenoate. The enzyme catalyses (4Z,7Z,10Z,13Z,16Z,19Z)-docosahexaenoate + O2 = (17S)-hydroperoxy-(4Z,7Z,10Z,13Z,15E,19Z)-docosahexaenoate. The catalysed reaction is (7S)-hydroperoxy-(4Z,8E,10Z,13Z,16Z,19Z)-docosahexaenoate + O2 = (7S,14S)-dihydroperoxy-(4Z,8E,10Z,12E,16Z,19Z)-docosahexaenoate. It catalyses the reaction (7S)-hydroperoxy-(4Z,8E,10Z,13Z,16Z,19Z)-docosahexaenoate + O2 = (7S,17S)-dihydroperoxy-(4Z,8E,10Z,13Z,15E,19Z)-docosahexaenoate. It carries out the reaction (4Z,7Z,10Z,13Z,16Z,19Z)-docosahexaenoate + O2 = (11S)-hydroperoxy-(4Z,7Z,9E,13Z,16Z,19Z)-docosahexaenoate. The enzyme catalyses N-(5Z,8Z,11Z,14Z)-eicosatetraenoyl-taurine + O2 = N-(12S)-hydroperoxy-(5Z,8Z,10E,14Z)-eicosatetraenoyl-taurine. The catalysed reaction is N-(5Z,8Z,11Z,14Z)-eicosatetraenoyl-gamma-aminobutanoate + O2 = N-(12S)-hydroperoxy-(5Z,8Z,10E,14Z)-eicosatetraenoyl-gamma-aminobutanoate. It catalyses the reaction N-(5Z,8Z,11Z,14Z)-eicosatetraenoyl-glycine + O2 = N-(12S)-hydroperoxy-(5Z,8Z,10E,14Z)-eicosatetraenoyl-glycine. It carries out the reaction N-(5Z,8Z,11Z,14Z)-eicosatetraenoyl-L-alanine + O2 = N-(12S)-hydroperoxy-(5Z,8Z,10E,14Z)-eicosatetraenoyl-alanine. The enzyme catalyses N-(5Z,8Z,11Z,14Z)-eicosatetraenoyl-taurine + O2 = N-(15S)-hydroperoxy-(5Z,8Z,11Z,13E)-eicosatetraenoyl-taurine. The catalysed reaction is N-(5Z,8Z,11Z,14Z)-eicosatetraenoyl-gamma-aminobutanoate + O2 = N-(15S)-hydroperoxy-(5Z,8Z,11Z,13E)-eicosatetraenoyl-gamma-aminobutanoate. It catalyses the reaction N-(5Z,8Z,11Z,14Z)-eicosatetraenoyl-glycine + O2 = N-(15S)-hydroperoxy-(5Z,8Z,11Z,13E)-eicosatetraenoyl-glycine. It carries out the reaction N-(5Z,8Z,11Z,14Z)-eicosatetraenoyl-L-alanine + O2 = N-(15S)-hydroperoxy-(5Z,8Z,11Z,13E)-eicosatetraenoyl-alanine. It functions in the pathway lipid metabolism; hydroperoxy eicosatetraenoic acid biosynthesis. Its function is as follows. Non-heme iron-containing dioxygenase that catalyzes the stereo-specific peroxidation of free and esterified polyunsaturated fatty acids generating a spectrum of bioactive lipid mediators. It inserts peroxyl groups at C12 or C15 of arachidonate ((5Z,8Z,11Z,14Z)-eicosatetraenoate) producing both 12-hydroperoxyeicosatetraenoate/12-HPETE and 15-hydroperoxyeicosatetraenoate/15-HPETE. It may then act on 12-HPETE to produce hepoxilins, which may show pro-inflammatory properties. Can also peroxidize linoleate ((9Z,12Z)-octadecadienoate) to 13-hydroperoxyoctadecadienoate. May participate in the sequential oxidations of DHA ((4Z,7Z,10Z,13Z,16Z,19Z)-docosahexaenoate) to generate specialized pro-resolving mediators (SPMs)like resolvin D5 ((7S,17S)-diHPDHA) and (7S,14S)-diHPDHA, that actively down-regulate the immune response and have anti-aggregation properties with platelets. Can convert epoxy fatty acids to hydroperoxy-epoxides derivatives followed by an intramolecular nucleophilic substitution leading to the formation of monocyclic endoperoxides. Plays an important role during the maintenance of self-tolerance by peroxidizing membrane-bound phosphatidylethanolamine which can then signal the sorting process for clearance of apoptotic cells during inflammation and prevent an autoimmune response. In addition to its role in the immune and inflammatory responses, this enzyme may play a role in epithelial wound healing in the cornea through production of lipoxin A4 (LXA(4)) and docosahexaenoic acid-derived neuroprotectin D1 (NPD1; 10R,17S-HDHA), both lipid autacoids exhibit anti-inflammatory and neuroprotective properties. Furthermore, it may regulate actin polymerization which is crucial for several biological processes such as the phagocytosis of apoptotic cells. It is also implicated in the generation of endogenous ligands for peroxisome proliferator activated receptor (PPAR-gamma), hence modulating macrophage development and function. It may also exert a negative effect on skeletal development by regulating bone mass through this pathway. As well as participates in ER stress and downstream inflammation in adipocytes, pancreatic islets, and liver. Finally, it is also involved in the cellular response to IL13/interleukin-13. The protein is Polyunsaturated fatty acid lipoxygenase ALOX15 of Bos taurus (Bovine).